A 351-amino-acid chain; its full sequence is DNA polymerase IV (351 aa).

The region spanning Ile4–Gly185 is the UmuC domain. Mg(2+) is bound by residues Asp8 and Asp103. Glu104 is an active-site residue.

The protein belongs to the DNA polymerase type-Y family. As to quaternary structure, monomer. Mg(2+) is required as a cofactor.

It localises to the cytoplasm. The enzyme catalyses DNA(n) + a 2'-deoxyribonucleoside 5'-triphosphate = DNA(n+1) + diphosphate. Functionally, poorly processive, error-prone DNA polymerase involved in untargeted mutagenesis. Copies undamaged DNA at stalled replication forks, which arise in vivo from mismatched or misaligned primer ends. These misaligned primers can be extended by PolIV. Exhibits no 3'-5' exonuclease (proofreading) activity. May be involved in translesional synthesis, in conjunction with the beta clamp from PolIII. The protein is DNA polymerase IV of Photorhabdus laumondii subsp. laumondii (strain DSM 15139 / CIP 105565 / TT01) (Photorhabdus luminescens subsp. laumondii).